The primary structure comprises 417 residues: Calreticulin (417 aa).

The first 17 residues, 1 to 17 (MLLSVPLLLGLLGLAAA), serve as a signal peptide directing secretion. The interval 18–197 (EPAVYFKEQF…NSQVESGSLE (180 aa)) is N-domain. Residue glutamine 26 coordinates Ca(2+). Lysine 48 is subject to N6-acetyllysine. Ca(2+)-binding residues include lysine 62 and lysine 64. Cysteine 105 and cysteine 137 are joined by a disulfide. An alpha-D-glucoside contacts are provided by tyrosine 109, lysine 111, tyrosine 128, and aspartate 135. N6-acetyllysine is present on lysine 159. A 1-1 repeat occupies 191–202 (VESGSLEDDWDF). The segment at 191-255 (VESGSLEDDW…DAKKPEDWDE (65 aa)) is 4 X approximate repeats. Residues 193-278 (SGSLEDDWDF…PEYKGEWKPR (86 aa)) are disordered. Residues 198–308 (DDWDFLPPKK…YSPDPSIYAY (111 aa)) form a P-domain region. Positions 207–251 (KIKDPDASKPEDWDERAKIDDPTDSKPEDWDKPEHIPDPDAKKPE) are enriched in basic and acidic residues. At lysine 209 the chain carries N6-acetyllysine. 6 repeat units span residues 210–221 (DPDASKPEDWDE), 227–238 (DPTDSKPEDWDK), 244–255 (DPDAKKPEDWDE), 259–269 (GEWEPPVIQNP), 273–283 (GEWKPRQIDNP), and 287–297 (GTWIHPEIDNP). Positions 237-270 (DKPEHIPDPDAKKPEDWDEEMDGEWEPPVIQNPE) are interaction with PPIB. The segment covering 252-261 (DWDEEMDGEW) has biased composition (acidic residues). The 3 X approximate repeats stretch occupies residues 259-297 (GEWEPPVIQNPEYKGEWKPRQIDNPDYKGTWIHPEIDNP). The segment at 309 to 417 (DNFGVLGLDL…DVPGQAKDEL (109 aa)) is C-domain. Residue aspartate 317 participates in an alpha-D-glucoside binding. Residue aspartate 328 coordinates Ca(2+). The tract at residues 350–417 (TKAAEKQMKD…DVPGQAKDEL (68 aa)) is disordered. Residues 352–379 (AAEKQMKDKQDEEQRLKEEEEDKKRKEE) show a composition bias toward basic and acidic residues. A compositionally biased stretch (acidic residues) spans 380 to 409 (EEAEDKEDDEDKDEDEEDEEDKEEDEEEDV). The Prevents secretion from ER motif lies at 414-417 (KDEL).

It belongs to the calreticulin family. As to quaternary structure, monomer. Component of an EIF2 complex at least composed of CELF1/CUGBP1, CALR, CALR3, EIF2S1, EIF2S2, HSP90B1 and HSPA5. Interacts with PDIA3/ERp57 and SPACA9. Interacts with TRIM21. Interacts with NR3C1. Interacts with PPIB. Interacts (via P-domain) with PDIA5. Interacts with GABARAP. Interacts with CLCC1.

It localises to the endoplasmic reticulum lumen. The protein resides in the cytoplasm. The protein localises to the cytosol. It is found in the secreted. Its subcellular location is the extracellular space. It localises to the extracellular matrix. The protein resides in the cell surface. The protein localises to the sarcoplasmic reticulum lumen. It is found in the cytoplasmic vesicle. Its subcellular location is the secretory vesicle. It localises to the cortical granule. The protein resides in the cytoplasmic granule. Functionally, calcium-binding chaperone that promotes folding, oligomeric assembly and quality control in the endoplasmic reticulum (ER) via the calreticulin/calnexin cycle. This lectin interacts transiently with almost all of the monoglucosylated glycoproteins that are synthesized in the ER. Interacts with the DNA-binding domain of NR3C1 and mediates its nuclear export. Involved in maternal gene expression regulation. May participate in oocyte maturation via the regulation of calcium homeostasis. The polypeptide is Calreticulin (CALR) (Chlorocebus aethiops (Green monkey)).